The sequence spans 549 residues: Chaperonin GroEL (549 aa).

ATP contacts are provided by residues 30-33, lysine 51, 87-91, glycine 415, and aspartate 495; these read TLGP and DGTTT.

It belongs to the chaperonin (HSP60) family. Forms a cylinder of 14 subunits composed of two heptameric rings stacked back-to-back. Interacts with the co-chaperonin GroES.

Its subcellular location is the cytoplasm. The enzyme catalyses ATP + H2O + a folded polypeptide = ADP + phosphate + an unfolded polypeptide.. In terms of biological role, together with its co-chaperonin GroES, plays an essential role in assisting protein folding. The GroEL-GroES system forms a nano-cage that allows encapsulation of the non-native substrate proteins and provides a physical environment optimized to promote and accelerate protein folding. This is Chaperonin GroEL from Colwellia maris.